The sequence spans 121 residues: Ig heavy chain V region MPC 11 (121 aa).

Residues 1–112 (EAQLQQSGAE…NSSPYFDSWG (112 aa)) enclose the Ig-like domain.

In Mus musculus (Mouse), this protein is Ig heavy chain V region MPC 11.